We begin with the raw amino-acid sequence, 519 residues long: uncharacterized protein (519 aa).

Helical transmembrane passes span 19 to 39 (FSSS…AIAT), 42 to 62 (VLVS…DWQI), 87 to 107 (MNIV…TVSG), 128 to 148 (LLAA…SLAV), 179 to 199 (VMMP…GLLA), 220 to 240 (FYAI…FDIA), 270 to 290 (LILP…YTGA), 311 to 331 (VGTS…LLII), 345 to 365 (WIVG…AWTI), 386 to 406 (IPMQ…AFST), 413 to 433 (FGIM…ELLL), 475 to 495 (LPYA…VGFT), and 496 to 516 (YSGL…IFAV).

It is found in the cell membrane. This is an uncharacterized protein from Haemophilus influenzae (strain ATCC 51907 / DSM 11121 / KW20 / Rd).